Here is a 395-residue protein sequence, read N- to C-terminus: Probable FMNH2-dependent monooxygenase SfnC (395 aa).

In terms of biological role, involved in the dimethyl sulfide degradation pathway. The sequence is that of Probable FMNH2-dependent monooxygenase SfnC from Pseudomonas putida (Arthrobacter siderocapsulatus).